Here is a 542-residue protein sequence, read N- to C-terminus: Membrane protein insertase YidC (542 aa).

The chain crosses the membrane as a helical span at residues 6–26 (NILLIGLLFVSFLLWQQWQAD). A compositionally biased stretch (polar residues) spans 32 to 41 (VAQTQSSVAP). Residues 32–57 (VAQTQSSVAPSTVADAHSSDVPDADS) are disordered. The next 5 helical transmembrane spans lie at 326 to 346 (LVVD…LLMF), 350 to 370 (FVGN…GMLY), 421 to 441 (GGCL…WVLL), 458 to 478 (LSVQ…MFIM), and 501 to 521 (VIFT…WLVG).

Belongs to the OXA1/ALB3/YidC family. Type 1 subfamily. In terms of assembly, interacts with the Sec translocase complex via SecD. Specifically interacts with transmembrane segments of nascent integral membrane proteins during membrane integration.

It is found in the cell inner membrane. Functionally, required for the insertion and/or proper folding and/or complex formation of integral membrane proteins into the membrane. Involved in integration of membrane proteins that insert both dependently and independently of the Sec translocase complex, as well as at least some lipoproteins. Aids folding of multispanning membrane proteins. In Shewanella piezotolerans (strain WP3 / JCM 13877), this protein is Membrane protein insertase YidC.